The sequence spans 236 residues: Probable transcriptional regulatory protein UUR10_0292 (236 aa).

This sequence belongs to the TACO1 family.

It is found in the cytoplasm. In Ureaplasma urealyticum serovar 10 (strain ATCC 33699 / Western), this protein is Probable transcriptional regulatory protein UUR10_0292.